Consider the following 323-residue polypeptide: Replication-associated protein A (323 aa).

One can recognise a CRESS-DNA virus Rep endonuclease domain in the interval 18–121 (RHRNANTFLT…PKDKWEKGTY (104 aa)). The RCR-1 motif lies at 25–28 (FLTY). A divalent metal cation contacts are provided by E59, H67, and H69. The RCR-2 motif lies at 67 to 69 (HCH). The For DNA cleavage activity role is filled by Y107. The short motif at 107–110 (YILK) is the RCR-3 element. D111 lines the a divalent metal cation pocket. An oligomerization region spans residues 181–193 (SASRLFPDIAEPY). Residues 204-208 (LHCNE) carry the LXCXE motif, interaction with host RBR1 motif. The disordered stretch occupies residues 256 to 286 (KEREASTSAAQHGQVKHPGLEASDDTTTGKT).

It belongs to the geminiviridae Rep protein family. As to quaternary structure, homooligomer. Interacts (via LXCXE domain) with host retinoblastoma-related protein 1 (RBR1), and may thereby deregulate the host cell cycle. Part of the C- and V-complexes which are RepA-Rep-DNA complexes involved in the c-sense and v-sense transcription. The cofactor is Mg(2+). Requires Mn(2+) as cofactor.

It is found in the host nucleus. It localises to the host cytoplasm. Implicated in enhancement of V-sense gene expression. Acts a an inhibitor of C-sense gene transcription. The sequence is that of Replication-associated protein A from Megathyrsus maximus (PanSV).